A 520-amino-acid chain; its full sequence is Bifunctional purine biosynthesis protein PurH (520 aa).

The region spanning 1 to 150 is the MGS-like domain; it reads MSDDRKAIKR…KNHPSVAVVV (150 aa).

The protein belongs to the PurH family.

It catalyses the reaction (6R)-10-formyltetrahydrofolate + 5-amino-1-(5-phospho-beta-D-ribosyl)imidazole-4-carboxamide = 5-formamido-1-(5-phospho-D-ribosyl)imidazole-4-carboxamide + (6S)-5,6,7,8-tetrahydrofolate. The enzyme catalyses IMP + H2O = 5-formamido-1-(5-phospho-D-ribosyl)imidazole-4-carboxamide. It functions in the pathway purine metabolism; IMP biosynthesis via de novo pathway; 5-formamido-1-(5-phospho-D-ribosyl)imidazole-4-carboxamide from 5-amino-1-(5-phospho-D-ribosyl)imidazole-4-carboxamide (10-formyl THF route): step 1/1. The protein operates within purine metabolism; IMP biosynthesis via de novo pathway; IMP from 5-formamido-1-(5-phospho-D-ribosyl)imidazole-4-carboxamide: step 1/1. This Corynebacterium glutamicum (strain R) protein is Bifunctional purine biosynthesis protein PurH.